A 549-amino-acid polypeptide reads, in one-letter code: Biotin-dependent acetyl-/propionyl-coenzyme A carboxylase beta5 subunit (549 aa).

One can recognise a CoA carboxyltransferase N-terminal domain in the interval 25-281 (TAGKLAELHK…NNFTDAPRYS (257 aa)). One can recognise a CoA carboxyltransferase C-terminal domain in the interval 295 to 542 (AKDLELDTLI…ERKIAHLPPK (248 aa)).

It belongs to the AccD/PCCB family. The biotin-dependent acyl-CoA carboxylase complex is composed of AccA3, which contains the biotin carboxylase (BC) and biotin carboxyl carrier protein (BCCP) domains, and AccD5, which contains the carboxyl transferase (CT) domain.

It catalyses the reaction N(6)-carboxybiotinyl-L-lysyl-[protein] + acetyl-CoA = N(6)-biotinyl-L-lysyl-[protein] + malonyl-CoA. The catalysed reaction is N(6)-carboxybiotinyl-L-lysyl-[protein] + propanoyl-CoA = methylmalonyl-CoA + N(6)-biotinyl-L-lysyl-[protein]. The protein operates within lipid metabolism; mycolic acid biosynthesis. Component of a biotin-dependent acyl-CoA carboxylase complex. This subunit transfers the CO2 from carboxybiotin to the CoA ester substrate. When associated with the alpha3 subunit AccA3, is involved in the carboxylation of acetyl-CoA and propionyl-CoA. This chain is Biotin-dependent acetyl-/propionyl-coenzyme A carboxylase beta5 subunit (accD5), found in Mycobacterium leprae (strain TN).